A 272-amino-acid chain; its full sequence is MDTEQGLKNHTAKTSPHDETAMASLTTIPTSVTLSAEQFEKLYLSPLTQRQGMLSKQMGNPTPLALGGFVITTTPLSCCLMGWRGATGSGIAFTGPIIFLGGGLLVLTSILEFILGNTFPCVVFGTIGAFWFAFGCTMTPAFNAAAPFSTSATDTVAGLSSPDFLNTYAFLFIWMGVLMLIFLACATRTNAVYVAIFTTLTLVFGFLSGAYWRLAVADALVGNRLVVAAGACLFVASMLGFYLLVAQLFDSVGLPVRLPVGDLSRFWDRRAR.

Polar residues predominate over residues 1–14; it reads MDTEQGLKNHTAKT. The segment at 1-21 is disordered; that stretch reads MDTEQGLKNHTAKTSPHDETA. 6 helical membrane-spanning segments follow: residues 63-83, 91-111, 122-144, 164-184, 192-212, and 225-245; these read PLALGGFVITTTPLSCCLMGW, IAFTGPIIFLGGGLLVLTSIL, VVFGTIGAFWFAFGCTMTPAFNA, FLNTYAFLFIWMGVLMLIFLA, VYVAIFTTLTLVFGFLSGAYW, and LVVAAGACLFVASMLGFYLLV.

This sequence belongs to the acetate uptake transporter (AceTr) (TC 2.A.96) family.

It localises to the cell membrane. The protein resides in the cell septum. This Aspergillus fumigatus (strain CBS 144.89 / FGSC A1163 / CEA10) (Neosartorya fumigata) protein is Protein alcS.